A 146-amino-acid chain; its full sequence is Ribosome maturation factor RimP (146 aa).

It belongs to the RimP family.

It is found in the cytoplasm. Required for maturation of 30S ribosomal subunits. The chain is Ribosome maturation factor RimP from Dechloromonas aromatica (strain RCB).